We begin with the raw amino-acid sequence, 102 residues long: uncharacterized protein (102 aa).

The first 41 residues, 1–41, serve as a signal peptide directing secretion; the sequence is MLFLDSYSLLIQFQRFKNWESPRRFSSSFPLLLFVFKPIFA.

This is an uncharacterized protein from Saccharomyces cerevisiae (strain ATCC 204508 / S288c) (Baker's yeast).